A 513-amino-acid polypeptide reads, in one-letter code: Teichoic acid ribitol-phosphate polymerase TarK (513 aa).

Belongs to the CDP-glycerol glycerophosphotransferase family.

Its subcellular location is the cell membrane. It carries out the reaction 4-O-[di(2R)-glycerylphospho]-N-acetyl-beta-D-mannosaminyl-(1-&gt;4)-N-acetyl-alpha-D-glucosaminyl di-trans,octa-cis-undecaprenyl diphosphate + n CDP-L-ribitol = 4-O-[(D-ribitylphospho)(n)-di{(2R)-glycerylphospho}]-N-acetyl-beta-D-mannosaminyl-(1-&gt;4)-N-acetyl-alpha-D-glucosaminyl di-trans,octa-cis-undecaprenyl diphosphate + n CMP + n H(+). Its pathway is cell wall biogenesis; poly(ribitol phosphate) teichoic acid biosynthesis. Functionally, can catalyze the polymerization of the main chain of the major teichoic acid by sequential transfer of ribitol phosphate units from CDP-ribitol to the second glycerol phosphate attached to the disaccharide linkage unit. This chain is Teichoic acid ribitol-phosphate polymerase TarK (tarK), found in Staphylococcus aureus (strain NCTC 8325 / PS 47).